The primary structure comprises 307 residues: uncharacterized protein (307 aa).

Residues 54–307 (RHYLSTSMRV…KALPVDFFRE (254 aa)) form the EAL domain. 2 helical membrane-spanning segments follow: residues 158–178 (PGFL…AHAL) and 203–223 (ALGV…LAYL).

The protein localises to the cell membrane. This is an uncharacterized protein from Mycobacterium tuberculosis (strain CDC 1551 / Oshkosh).